Here is a 370-residue protein sequence, read N- to C-terminus: G-protein coupled receptor homolog K2 (370 aa).

The Extracellular segment spans residues 1-61 (MTSPTNSTML…CTFLEDTKYH (61 aa)). N-linked (GlcNAc...) asparagine; by host glycosylation is found at N6 and N51. A helical transmembrane segment spans residues 62-82 (IIVIHIILFLLGSIGNIFVVS). The Cytoplasmic segment spans residues 83 to 94 (LIAFKRNKSITD). The chain crosses the membrane as a helical span at residues 95 to 115 (IYILNLSMSDCIFVFQIPFIV). Residues 116–131 (YSKLDQWIFGNILCKI) lie on the Extracellular side of the membrane. The helical transmembrane segment at 132–152 (MSVLYYVGFFSNMFIITLMSI) threads the bilayer. Residues 153–171 (DRYFAIVHPIKRQPYRTKR) lie on the Cytoplasmic side of the membrane. Residues 172–192 (IGILMCCSAWLLSLILSSPVS) traverse the membrane as a helical segment. Over 193–223 (KLYENIPHMSKDIYQCTLTNENDSIIAFIKR) the chain is Extracellular. Residues 224-244 (LMQIEITILGFLIPIIIFVYC) traverse the membrane as a helical segment. The Cytoplasmic segment spans residues 245 to 265 (YYRIFTTVVRLRNRRKYKSIK). The helical transmembrane segment at 266-286 (IVLMIVVCSLICWIPLYIVLM) threads the bilayer. The Extracellular segment spans residues 287 to 300 (IATIVSLYTSNIFR). The helical transmembrane segment at 301-321 (HLCLYLNLAYAITFSETISLA) threads the bilayer. Over 322–370 (RCCINPIIYTLIGEHVRSRISSICSCIYRDNRIRKKLFSRKSSSSSNII) the chain is Cytoplasmic.

This sequence belongs to the G-protein coupled receptor 1 family.

Its subcellular location is the host cell membrane. Functionally, putative chemokine receptor. The protein is G-protein coupled receptor homolog K2 of Sus scrofa (Pig).